A 106-amino-acid chain; its full sequence is Small ribosomal subunit protein uS10 (106 aa).

The protein belongs to the universal ribosomal protein uS10 family. Part of the 30S ribosomal subunit.

Its function is as follows. Involved in the binding of tRNA to the ribosomes. This Synechococcus sp. (strain CC9311) protein is Small ribosomal subunit protein uS10.